The sequence spans 330 residues: RNA polymerase sigma factor RpoS (330 aa).

Residues 56-89 form a sigma-70 factor domain-1 region; the sequence is DATQLYLGEIGYSPLLTAEEEVYFARRALRGDVA. The tract at residues 94-164 is sigma-70 factor domain-2; that stretch reads MIESNLRLVV…ERAIMNQTRT (71 aa). Positions 118–121 match the Interaction with polymerase core subunit RpoC motif; it reads DLIE. The interval 174–249 is sigma-70 factor domain-3; that stretch reads ELNVYLRTAR…DEKENGPEDT (76 aa). Residues 262–315 are sigma-70 factor domain-4; it reads WLFELNAKQREVLARRFGLLGYEAATLEDVGREIGLTRERVRQIQVEGLRRLRE. The H-T-H motif DNA-binding region spans 288–307; sequence LEDVGREIGLTRERVRQIQV.

It belongs to the sigma-70 factor family. RpoS subfamily. As to quaternary structure, interacts with the RNA polymerase core enzyme.

The protein localises to the cytoplasm. In terms of biological role, sigma factors are initiation factors that promote the attachment of RNA polymerase to specific initiation sites and are then released. This sigma factor is the master transcriptional regulator of the stationary phase and the general stress response. In Shigella flexneri, this protein is RNA polymerase sigma factor RpoS.